An 85-amino-acid chain; its full sequence is ATP synthase subunit c (85 aa).

The next 2 helical transmembrane spans lie at 10–30 (IAVG…FALL) and 53–73 (FIIA…ALLF).

Belongs to the ATPase C chain family. As to quaternary structure, F-type ATPases have 2 components, F(1) - the catalytic core - and F(0) - the membrane proton channel. F(1) has five subunits: alpha(3), beta(3), gamma(1), delta(1), epsilon(1). F(0) has three main subunits: a(1), b(2) and c(10-14). The alpha and beta chains form an alternating ring which encloses part of the gamma chain. F(1) is attached to F(0) by a central stalk formed by the gamma and epsilon chains, while a peripheral stalk is formed by the delta and b chains.

It localises to the cell inner membrane. F(1)F(0) ATP synthase produces ATP from ADP in the presence of a proton or sodium gradient. F-type ATPases consist of two structural domains, F(1) containing the extramembraneous catalytic core and F(0) containing the membrane proton channel, linked together by a central stalk and a peripheral stalk. During catalysis, ATP synthesis in the catalytic domain of F(1) is coupled via a rotary mechanism of the central stalk subunits to proton translocation. In terms of biological role, key component of the F(0) channel; it plays a direct role in translocation across the membrane. A homomeric c-ring of between 10-14 subunits forms the central stalk rotor element with the F(1) delta and epsilon subunits. This chain is ATP synthase subunit c, found in Aliivibrio fischeri (strain ATCC 700601 / ES114) (Vibrio fischeri).